Consider the following 546-residue polypeptide: Choline/ethanolamine transporter FLVCR2 (546 aa).

The tract at residues 1–84 (MVNESLNQEE…TLAQPSGLTH (84 aa)) is disordered. At 1-93 (MVNESLNQEE…HPNELVKEDS (93 aa)) the chain is on the cytoplasmic side. Residues 22 to 49 (QADTSYSTQPSVSIHPSVSGHPSVSIHP) show a composition bias toward polar residues. A run of 7 repeats spans residues 31–36 (PSVSIH), 37–42 (PSVSGH), 43–48 (PSVSIH), 49–54 (PSVSGH), 55–60 (PSVSID), 61–66 (PSVSVH), and 67–72 (PSSSAH). The interval 31 to 84 (PSVSIHPSVSGHPSVSIHPSVSGHPSVSIDPSVSVHPSSSAHPSTLAQPSGLTH) is 9 X 6 AA tandem repeats of P-S-[VS]-S-[VIAG]-[HD]. A compositionally biased stretch (low complexity) spans 54–74 (HPSVSIDPSVSVHPSSSAHPS). One copy of the 8; approximate repeat lies at 73 to 78 (PSTLAQ). The 9; approximate repeat unit spans residues 79-84 (PSGLTH). Residues 94–118 (VIKVSKRRWAVVLVFSCYSLCNAFQ) traverse the membrane as a helical segment. Choline contacts are provided by Asn115, Ala116, and Trp119. Residues 119 to 136 (WIQYGSINNIFMNFYGVS) are Extracellular-facing. A helical transmembrane segment spans residues 137–164 (AFAIDWLSMCYMLTYIPLLLPVAWMLEK). Residues 165-166 (FG) are Cytoplasmic-facing. A helical transmembrane segment spans residues 167–186 (LRTIAITGSALNCLGAWVKL). The Extracellular segment spans residues 187-193 (GSLEPHL). A helical transmembrane segment spans residues 194–222 (FPVTMVGQVICSVAQVFILGMPSRIASVW). Leu212 contributes to the choline binding site. At 223-227 (FGANE) the chain is on the cytoplasmic side. The chain crosses the membrane as a helical span at residues 228 to 253 (VSTACSMAVFGNQLGIAIGFLVPPVL). Residues 254–258 (VPNIK) lie on the Extracellular side of the membrane. The chain crosses the membrane as a helical span at residues 259–288 (DQEKLAYHISIMFYIIGGVATLLFILVIIV). The Cytoplasmic portion of the chain corresponds to 289 to 324 (FKEKPKYPPSRAQSLSYALATTDASYLSSIVRLFKN). The helical transmembrane segment at 325 to 355 (LNFVLLVITYGLNAGAFYALSTLLNRMVIMH) threads the bilayer. Position 342 (Tyr342) interacts with choline. Residues 356–359 (FPGQ) lie on the Extracellular side of the membrane. A helical transmembrane segment spans residues 360–388 (EVNAGRIGLTIVIAGMFGAMISGIWLDKS). The Cytoplasmic portion of the chain corresponds to 389 to 390 (KT). A helical transmembrane segment spans residues 391–413 (YKETTLVVYIMTLVGMVVYTFTL). Residues 414 to 416 (NLN) are Extracellular-facing. Residues 417–446 (HLWIVFITADSLGFFMTGYLPLGFEFAVEL) traverse the membrane as a helical segment. The Cytoplasmic segment spans residues 447-454 (TYPESEGV). The chain crosses the membrane as a helical span at residues 455–480 (SSGLLNVSAQVFGIIFTISQGQIIDN). Gln464 is a choline binding site. The Extracellular segment spans residues 481–482 (YG). The helical transmembrane segment at 483-505 (SVPGNIFLCVFLALGSALTAFIK) threads the bilayer. Topologically, residues 506–546 (SDLRRQRANKDAPETKVQEEEEEEEESNTSKVPTVLSEAHL) are cytoplasmic. The segment covering 511–523 (QRANKDAPETKVQ) has biased composition (basic and acidic residues). The tract at residues 511-546 (QRANKDAPETKVQEEEEEEEESNTSKVPTVLSEAHL) is disordered. At Ser535 the chain carries Phosphoserine.

It belongs to the major facilitator superfamily. Feline leukemia virus subgroup C receptor (TC 2.A.1.28.1) family. Interacts with components of electron transfer chain complexes III, IV and V including CYC1, NDUFA4, COX4I1, ATP5PD and ATP5F1C; these interactions occur in the absence of heme and are disrupted upon heme binding. Interacts with ATP2A2; this interaction occurs in the absence of heme and promotes ATP2A2 proteasomal degradation; the complex is dissociated upon heme binding. Interacts with HMOX1; this interaction is potentiated in the presence of heme.

The protein localises to the cell membrane. The protein resides in the mitochondrion membrane. It localises to the endoplasmic reticulum membrane. The enzyme catalyses choline(out) = choline(in). The catalysed reaction is ethanolamine(in) = ethanolamine(out). It carries out the reaction heme b(in) = heme b(out). In terms of biological role, choline uniporter that specifically mediates choline uptake at the blood-brain-barrier. Responsible for the majority of choline uptake across the blood-brain-barrier from the circulation into the brain. Choline, a nutrient critical for brain development, is a precursor of phosphatidylcholine, as well as betaine. Also mediates transport of ethanolamine. Choline and ethanolamine transport is not coupled with proton transport and is exclusively driven by the choline gradient across the plasma membrane. However, the presence of an inwardly directed proton gradient enhances choline uptake. Also acts as a heme b transporter. Required to regulate mitochondrial respiration processes, ATP synthesis and thermogenesis. At low heme levels, interacts with components of electron transfer chain (ETC) complexes and ATP2A2, leading to ubiquitin-mediated degradation of ATP2A2 and inhibition of thermogenesis. Upon heme binding, dissociates from ETC complexes to allow switching from mitochondrial ATP synthesis to thermogenesis. This Rattus norvegicus (Rat) protein is Choline/ethanolamine transporter FLVCR2 (Flvcr2).